The primary structure comprises 306 residues: tRNA pseudouridine synthase B (306 aa).

Catalysis depends on D46, which acts as the Nucleophile.

It belongs to the pseudouridine synthase TruB family. Type 1 subfamily.

It carries out the reaction uridine(55) in tRNA = pseudouridine(55) in tRNA. Functionally, responsible for synthesis of pseudouridine from uracil-55 in the psi GC loop of transfer RNAs. The protein is tRNA pseudouridine synthase B of Gluconacetobacter diazotrophicus (strain ATCC 49037 / DSM 5601 / CCUG 37298 / CIP 103539 / LMG 7603 / PAl5).